Reading from the N-terminus, the 414-residue chain is Glutathione gamma-glutamylcysteinyltransferase (414 aa).

The 220-residue stretch at 37-256 (QLKKSFYKRQ…GYVLLEPMHI (220 aa)) folds into the Peptidase C83 domain.

It belongs to the phytochelatin synthase family.

The catalysed reaction is [Glu(-Cys)](n)-Gly + glutathione + H(+) = [Glu(-Cys)](n+1)-Gly + glycine. Functionally, required for detoxification of heavy metals such as cadmium and arsenate. The protein is Glutathione gamma-glutamylcysteinyltransferase of Schizosaccharomyces pombe (strain 972 / ATCC 24843) (Fission yeast).